The following is a 116-amino-acid chain: CDKN2AIP N-terminal-like protein (116 aa).

The residue at position 1 (Met1) is an N-acetylmethionine. The XRN2-binding (XTBD) domain occupies 24-116; that stretch reads AEQFRSYSES…RSELMRKHQS (93 aa).

It belongs to the CARF family. As to quaternary structure, interacts with XRN2; the interaction is direct.

This Mus musculus (Mouse) protein is CDKN2AIP N-terminal-like protein (Cdkn2aipnl).